Here is a 206-residue protein sequence, read N- to C-terminus: Large ribosomal subunit protein mL62 (206 aa).

Residues 1-29 (MAAARCLRWGLSRAEAWLLPPPTSCCHRA) constitute a mitochondrion transit peptide. Gln-90 carries the N5-methylglutamine modification.

It belongs to the prokaryotic/mitochondrial release factor family. Mitochondrion-specific ribosomal protein mL62 subfamily. As to quaternary structure, component of the mitochondrial ribosome large subunit (39S) which comprises a 16S rRNA and about 50 distinct proteins. Methylation of glutamine in the GGQ triplet by HEMK1.

The protein resides in the mitochondrion. It catalyses the reaction an N-acyl-L-alpha-aminoacyl-tRNA + H2O = an N-acyl-L-amino acid + a tRNA + H(+). Functionally, essential peptidyl-tRNA hydrolase component of the mitochondrial large ribosomal subunit. Acts as a codon-independent translation release factor that has lost all stop codon specificity and directs the termination of translation in mitochondrion, possibly in case of abortive elongation. May be involved in the hydrolysis of peptidyl-tRNAs that have been prematurely terminated and thus in the recycling of stalled mitochondrial ribosomes. In Bos taurus (Bovine), this protein is Large ribosomal subunit protein mL62.